Consider the following 287-residue polypeptide: Nucleotide-binding protein GM21_3387 (287 aa).

8–15 (GLSGSGKS) is an ATP binding site. 59-62 (DIRS) is a GTP binding site.

The protein belongs to the RapZ-like family.

Functionally, displays ATPase and GTPase activities. The protein is Nucleotide-binding protein GM21_3387 of Geobacter sp. (strain M21).